Reading from the N-terminus, the 308-residue chain is N-acetylgalactosamine kinase AgaK (308 aa).

Residues 4–11 and 132–139 contribute to the ATP site; these read GLDIGGTK and GTGGGLCI. Zn(2+) is bound by residues H156, C174, C176, and C181.

The protein belongs to the ROK (NagC/XylR) family.

The protein localises to the cytoplasm. It catalyses the reaction N-acetyl-D-galactosamine + ATP = N-acetyl-D-galactosamine 6-phosphate + ADP + H(+). The catalysed reaction is N-acetyl-D-glucosamine + ATP = N-acetyl-D-glucosamine 6-phosphate + ADP + H(+). Functionally, involved in the pathway of N-acetyl-D-galactosamine degradation. Catalyzes the phosphorylation of N-acetyl-D-galactosamine (GalNAc) to yield D-galactosamine 6-phosphate (GalN-6-P). It can also phosphorylate N-acetylglucosamine (GlcNAc). This chain is N-acetylgalactosamine kinase AgaK, found in Shewanella sp. (strain ANA-3).